Consider the following 330-residue polypeptide: uncharacterized protein (330 aa).

This is an uncharacterized protein from Schizosaccharomyces pombe (strain 972 / ATCC 24843) (Fission yeast).